Here is a 168-residue protein sequence, read N- to C-terminus: Ubiquitin-fold modifier-conjugating enzyme 1 (168 aa).

Cys119 (glycyl thioester intermediate) is an active-site residue.

Belongs to the ubiquitin-conjugating enzyme family. UFC1 subfamily.

Functionally, E2-like enzyme which forms an intermediate with UFM1 via a thioester linkage. In Drosophila grimshawi (Hawaiian fruit fly), this protein is Ubiquitin-fold modifier-conjugating enzyme 1.